We begin with the raw amino-acid sequence, 185 residues long: Large ribosomal subunit protein bL17 (185 aa).

It belongs to the bacterial ribosomal protein bL17 family. As to quaternary structure, part of the 50S ribosomal subunit. Contacts protein L32.

The polypeptide is Large ribosomal subunit protein bL17 (Rhodococcus erythropolis (strain PR4 / NBRC 100887)).